Here is a 146-residue protein sequence, read N- to C-terminus: Probable flagellum biosynthesis repressor protein FlbT 1 (146 aa).

Belongs to the FlbT family.

Its function is as follows. Has a post-transcriptional repressor function in flagellum biogenesis. Associates with the 5'-UTR of fljK mRNA and promotes its degradation. In Bradyrhizobium diazoefficiens (strain JCM 10833 / BCRC 13528 / IAM 13628 / NBRC 14792 / USDA 110), this protein is Probable flagellum biosynthesis repressor protein FlbT 1.